A 189-amino-acid polypeptide reads, in one-letter code: Ribonuclease M5 2 (189 aa).

A Toprim domain is found at 8–91 (SQVIVAEGRD…VFLKRDEAVP (84 aa)). The Mg(2+) site is built by E14, D60, and D62.

It belongs to the ribonuclease M5 family. The cofactor is Mg(2+).

It localises to the cytoplasm. The catalysed reaction is Endonucleolytic cleavage of RNA, removing 21 and 42 nucleotides, respectively, from the 5'- and 3'-termini of a 5S-rRNA precursor.. Its function is as follows. Required for correct processing of both the 5' and 3' ends of 5S rRNA precursor. Cleaves both sides of a double-stranded region yielding mature 5S rRNA in one step. In Ligilactobacillus salivarius (strain UCC118) (Lactobacillus salivarius), this protein is Ribonuclease M5 2.